A 204-amino-acid chain; its full sequence is ADP-ribosylation factor-like protein 15 (204 aa).

GTP contacts are provided by residues Gly-39–Thr-46, Glu-82–Ala-86, and Asn-142–Asp-145.

The protein belongs to the small GTPase superfamily. Arf family.

This Homo sapiens (Human) protein is ADP-ribosylation factor-like protein 15 (ARL15).